Here is a 578-residue protein sequence, read N- to C-terminus: Putative fatty-acid--CoA ligase fadD21 (578 aa).

This sequence belongs to the ATP-dependent AMP-binding enzyme family.

This Mycobacterium bovis (strain ATCC BAA-935 / AF2122/97) protein is Putative fatty-acid--CoA ligase fadD21 (fadD21).